A 194-amino-acid polypeptide reads, in one-letter code: Recombination protein RecR (194 aa).

The C4-type zinc finger occupies 52-67 (CTECRTFTEEEVCHIC). In terms of domain architecture, Toprim spans 76-171 (GQICVVESPA…EASRIAHGVP (96 aa)).

The protein belongs to the RecR family.

Its function is as follows. May play a role in DNA repair. It seems to be involved in an RecBC-independent recombinational process of DNA repair. It may act with RecF and RecO. In Vibrio campbellii (strain ATCC BAA-1116), this protein is Recombination protein RecR.